Consider the following 376-residue polypeptide: Beta-centractin (376 aa).

The residue at position 1 (M1) is an N-acetylmethionine. The residue at position 4 (Y4) is a 3'-nitrotyrosine.

The protein belongs to the actin family. ARP1 subfamily.

The protein resides in the cytoplasm. Its subcellular location is the cytoskeleton. It is found in the microtubule organizing center. It localises to the centrosome. In terms of biological role, component of a multi-subunit complex involved in microtubule based vesicle motility. It is associated with the centrosome. This Homo sapiens (Human) protein is Beta-centractin (ACTR1B).